The following is a 97-amino-acid chain: uncharacterized protein (97 aa).

The segment covering 1–24 (MTQKNGADRPDDYKRFSSLDKEYD) has biased composition (basic and acidic residues). Positions 1–97 (MTQKNGADRP…FEGTIDQNLD (97 aa)) are disordered. The segment covering 31 to 43 (SNTETESVNTETQ) has biased composition (low complexity). Positions 44–53 (THNKENKNDT) are enriched in basic and acidic residues.

This is an uncharacterized protein from Bacillus subtilis (strain 168).